Here is a 534-residue protein sequence, read N- to C-terminus: EH domain-containing protein 1 (534 aa).

An N-acetylmethionine modification is found at Met-1. In terms of domain architecture, Dynamin-type G spans Phe-55–Pro-286. The segment at Gly-65–Thr-72 is G1 motif. Position 65-72 (Gly-65–Thr-72) interacts with ATP. Residues Glu-91–Pro-92 are G2 motif. Positions Asp-153–Gly-156 are G3 motif. Residues Asp-198–Gln-227 are a coiled coil. The G4 motif stretch occupies residues Asn-219–Asp-222. Lys-220 is an ATP binding site. Position 243 (Ile-243) is a region of interest, G5 motif. Residue Trp-258 participates in ATP binding. Phosphoserine occurs at positions 355 and 456. The EH domain occupies Asp-444–Arg-532. Residues Leu-476–Lys-511 form the EF-hand domain. Ca(2+) contacts are provided by Asp-489, Asp-491, Asp-493, and Glu-500.

Belongs to the TRAFAC class dynamin-like GTPase superfamily. Dynamin/Fzo/YdjA family. EHD subfamily. As to quaternary structure, homooligomer, and heterooligomer with EHD2, EHD3 and EHD4, ATP-binding is required for heterooligomerization. Interacts (via EH domain) with MICALL1 (via NPF1 motif); the interaction is direct and recruits EHD1 to membranes. Interacts with RAB35; the interaction is indirect through MICALL1 and recruits EHD1 to membranes. Interacts (via EH domain) with PACSIN2 (via NPF motifs); regulates localization to tubular recycling endosome membranes. Interacts with PACSIN1. Interacts with RAB8A. Interacts with FER1L5 (via second C2 domain). Interacts with MYOF. Interacts with ZFYVE20. Interacts (via EH domain) with RAB11FIP2.

The protein resides in the recycling endosome membrane. Its subcellular location is the early endosome membrane. The protein localises to the cell membrane. It is found in the cell projection. It localises to the cilium membrane. Its function is as follows. ATP- and membrane-binding protein that controls membrane reorganization/tubulation upon ATP hydrolysis. In vitro causes vesiculation of endocytic membranes. Acts in early endocytic membrane fusion and membrane trafficking of recycling endosomes. Recruited to endosomal membranes upon nerve growth factor stimulation, indirectly regulates neurite outgrowth. Plays a role in myoblast fusion. Involved in the unidirectional retrograde dendritic transport of endocytosed BACE1 and in efficient sorting of BACE1 to axons implicating a function in neuronal APP processing. Plays a role in the formation of the ciliary vesicle (CV), an early step in cilium biogenesis. Proposed to be required for the fusion of distal appendage vesicles (DAVs) to form the CV by recruiting SNARE complex component SNAP29. Is required for recruitment of transition zone proteins CEP290, RPGRIP1L, TMEM67 and B9D2, and of IFT20 following DAV reorganization before Rab8-dependent ciliary membrane extension. Required for the loss of CCP110 form the mother centriole essential for the maturation of the basal body during ciliogenesis. The sequence is that of EH domain-containing protein 1 from Rattus norvegicus (Rat).